Consider the following 226-residue polypeptide: ATP synthase F(0) complex subunit a (226 aa).

The next 5 membrane-spanning stretches (helical) occupy residues 5–25 (LFAPFMIPVMLGIPITTLIII), 68–88 (WSLMLISLFLFIASTNLLGML), 97–117 (QLSMNVGMAIPLWAGTVTTGF), 136–156 (FLIPMLVIIETISLFIQPVAW), and 189–209 (AFITFTILALLTILEFAVALI).

This sequence belongs to the ATPase A chain family. Component of the ATP synthase complex composed at least of ATP5F1A/subunit alpha, ATP5F1B/subunit beta, ATP5MC1/subunit c (homooctomer), MT-ATP6/subunit a, MT-ATP8/subunit 8, ATP5ME/subunit e, ATP5MF/subunit f, ATP5MG/subunit g, ATP5MK/subunit k, ATP5MJ/subunit j, ATP5F1C/subunit gamma, ATP5F1D/subunit delta, ATP5F1E/subunit epsilon, ATP5PF/subunit F6, ATP5PB/subunit b, ATP5PD/subunit d, ATP5PO/subunit OSCP. ATP synthase complex consists of a soluble F(1) head domain (subunits alpha(3) and beta(3)) - the catalytic core - and a membrane F(0) domain - the membrane proton channel (subunits c, a, 8, e, f, g, k and j). These two domains are linked by a central stalk (subunits gamma, delta, and epsilon) rotating inside the F1 region and a stationary peripheral stalk (subunits F6, b, d, and OSCP). Interacts with DNAJC30; interaction is direct.

It is found in the mitochondrion inner membrane. The enzyme catalyses H(+)(in) = H(+)(out). Its function is as follows. Subunit a, of the mitochondrial membrane ATP synthase complex (F(1)F(0) ATP synthase or Complex V) that produces ATP from ADP in the presence of a proton gradient across the membrane which is generated by electron transport complexes of the respiratory chain. ATP synthase complex consist of a soluble F(1) head domain - the catalytic core - and a membrane F(1) domain - the membrane proton channel. These two domains are linked by a central stalk rotating inside the F(1) region and a stationary peripheral stalk. During catalysis, ATP synthesis in the catalytic domain of F(1) is coupled via a rotary mechanism of the central stalk subunits to proton translocation. With the subunit c (ATP5MC1), forms the proton-conducting channel in the F(0) domain, that contains two crucial half-channels (inlet and outlet) that facilitate proton movement from the mitochondrial intermembrane space (IMS) into the matrix. Protons are taken up via the inlet half-channel and released through the outlet half-channel, following a Grotthuss mechanism. This chain is ATP synthase F(0) complex subunit a, found in Balaenoptera physalus (Fin whale).